The following is a 313-amino-acid chain: uncharacterized protein (313 aa).

6 residues coordinate a divalent metal cation: H8, H10, E126, H180, H207, and D262.

The protein belongs to the metallo-dependent hydrolases superfamily. TatD-type hydrolase family. A divalent metal cation serves as cofactor.

Functionally, putative deoxyribonuclease. This is an uncharacterized protein from Saccharomyces cerevisiae (strain ATCC 204508 / S288c) (Baker's yeast).